The sequence spans 874 residues: MKAAEIREKFLKFFESKGHTIVRSSSLVPGNDPTLLFTNSGMVQFKDVFLGAETRPYSRATTAQRSVRAGGKHNDLENVGYTARHHTFFEMLGNFSFGDYFKRDAIHYAWELLTTVYKLPADKLWVTVYHDDDEAYDIWAKEVGVPAERIIRIGDNKGARYASDNFWQMGDTGPCGPCSEIFYDHGPGVWGGPPGSPEEDGDRYIEIWNLVFMQFNRDAQGNMTRLPKPCVDTGMGLERIAAVLQHVHSNYEIDLFQQLIKASARETGVADLANNSLKVIADHIRACSFLIVDGVIPGNEGRGYVLRRIVRRAIRHGYKLGRKGPFFHKLVADLVAEMGAAYPELKEAEQRVTDVLRQEEERFFETIEHGMSILEAALADLDAAGGKTLDGELAFKLHDTYGFPLDLTADVCRERGVTVDEPAFDDAMARQREQARAAGKFKATQGLEYTGAKTTFHGYEEIAFDDAKVVALYVEGASVGEVKAGESAVVVLDHTPFYAESGGQVGDQGVLANAATRFAVADTLKVQADVIGHHGELEQGVLKVGDAVRAEIDAARRARTARNHSATHLMHKALRDVLGSHVQQKGSLVDADKTRFDFAHNAPLTDDEIRRVEAIVNEQVLANAPGIVRVMPYDDAVKGGAMALFGEKYGDEVRVLDLGFSRELCGGTHVHRTGDIGLFKIVAEGGVAAGIRRVEAITGDNAVRYVQALDARVNAAAAALKAQPSELIQRIGQVQDQVKSLEKELGALKSKLASSQGDELAQQAVEVGGVHVLAATLDGADAKTLRETVDKLKDKLKSAAIVLAAVDGGKVSLIAGVTADASKKVKAGELVNFVAQQVGGKGGGRPDMAQAGGTEPANLPAALAGVKGWVEERL.

The Zn(2+) site is built by histidine 564, histidine 568, cysteine 665, and histidine 669.

This sequence belongs to the class-II aminoacyl-tRNA synthetase family. The cofactor is Zn(2+).

It localises to the cytoplasm. The catalysed reaction is tRNA(Ala) + L-alanine + ATP = L-alanyl-tRNA(Ala) + AMP + diphosphate. Catalyzes the attachment of alanine to tRNA(Ala) in a two-step reaction: alanine is first activated by ATP to form Ala-AMP and then transferred to the acceptor end of tRNA(Ala). Also edits incorrectly charged Ser-tRNA(Ala) and Gly-tRNA(Ala) via its editing domain. The chain is Alanine--tRNA ligase from Burkholderia thailandensis (strain ATCC 700388 / DSM 13276 / CCUG 48851 / CIP 106301 / E264).